The chain runs to 186 residues: Inner membrane-spanning protein YciB (186 aa).

6 consecutive transmembrane segments (helical) span residues 3-23 (FLFD…AGIY), 24-44 (VATT…WFKH), 49-69 (AMQW…LIFH), 76-96 (WKPT…AVLL), 121-141 (LVWS…AYHF), and 149-169 (FKLF…SVWL).

The protein belongs to the YciB family.

Its subcellular location is the cell inner membrane. Plays a role in cell envelope biogenesis, maintenance of cell envelope integrity and membrane homeostasis. This chain is Inner membrane-spanning protein YciB, found in Ralstonia nicotianae (strain ATCC BAA-1114 / GMI1000) (Ralstonia solanacearum).